Reading from the N-terminus, the 706-residue chain is Glutamine-dependent NAD(+) synthetase (706 aa).

The CN hydrolase domain occupies 5-275 (VTVATCALNQ…VEVLTATLDL (271 aa)). E45 functions as the Proton acceptor; for glutaminase activity in the catalytic mechanism. K114 serves as the catalytic For glutaminase activity. The Nucleophile; for glutaminase activity role is filled by C175. Residues 325–706 (YHSPEEEISL…AEPQSLDGVD (382 aa)) are ligase. 355-362 (PLSGGVDS) contacts ATP. S357 is an active-site residue.

It in the C-terminal section; belongs to the NAD synthetase family. As to quaternary structure, homohexamer.

The catalysed reaction is deamido-NAD(+) + L-glutamine + ATP + H2O = L-glutamate + AMP + diphosphate + NAD(+) + H(+). It functions in the pathway cofactor biosynthesis; NAD(+) biosynthesis; NAD(+) from deamido-NAD(+) (L-Gln route): step 1/1. Catalyzes the final step of the nicotinamide adenine dinucleotide (NAD) de novo synthesis pathway, the ATP-dependent amidation of deamido-NAD using L-glutamine as a nitrogen source. This Homo sapiens (Human) protein is Glutamine-dependent NAD(+) synthetase (NADSYN1).